A 342-amino-acid chain; its full sequence is DNA-directed RNA polymerase subunit alpha (342 aa).

The alpha N-terminal domain (alpha-NTD) stretch occupies residues 1-239 (MTTFLAKNWS…DQLQVFINFQ (239 aa)). Residues 254–342 (INPVLLKKVY…SLAKKHEDQY (89 aa)) form an alpha C-terminal domain (alpha-CTD) region.

Belongs to the RNA polymerase alpha chain family. Homodimer. The RNAP catalytic core consists of 2 alpha, 1 beta, 1 beta' and 1 omega subunit. When a sigma factor is associated with the core the holoenzyme is formed, which can initiate transcription.

The enzyme catalyses RNA(n) + a ribonucleoside 5'-triphosphate = RNA(n+1) + diphosphate. Functionally, DNA-dependent RNA polymerase catalyzes the transcription of DNA into RNA using the four ribonucleoside triphosphates as substrates. The sequence is that of DNA-directed RNA polymerase subunit alpha from Orientia tsutsugamushi (strain Boryong) (Rickettsia tsutsugamushi).